Consider the following 554-residue polypeptide: MMLSRAKPAVGGESPHTDKRKKKGRKIPKLEDLLSQRDFTGAITLLEFKRHVGEQEEDTNLWIGYCAFHLGDYKRALEEYENAAKEENCNPEVWVNLACTYFFLGMYKQAEAAGFKAPKSRLQNRLLFHLAHKFNDEKKLMNFHQNLQDIKEDQLSLASIHYMRSHYQEAIDIYKRILLDNREYLALNVYVALCYYKLDYYDVSQEVLAVYLQQIPDSTIALNLKACNHFRLYNGKAAEAELKSLMDNASSPFEFAKELIRHNLVVFRGGEGALQVLPPLVDVIPEARLNLVIYYLRQDDVQEAYNLIKDLEPTTPQEYILKGVVNAALGQEMGSRDHMKIAQQFFQLVGGSASECDTIPGRQCMASCFFLLKQFDDVLIYLNSFKSYFYNDDIFNFNYAQAKAATGNTSEGEEVFLLIQSEKLKNDYIYLSWLARCYIMNKKPRLAWELYLKMETSGESFSLLQLIANDCYKMGQFYYSAKAFDVLERLDPNPEYWEGKRGACVGIFQMILAGREPKETLREVLHLLRSTGNTQVEYIIRIMKKWAKENRVPI.

Residues 1-27 (MMLSRAKPAVGGESPHTDKRKKKGRKI) form a disordered region. The segment covering 18–27 (DKRKKKGRKI) has biased composition (basic residues). TPR repeat units follow at residues 57–90 (EDTN…ENCN), 92–125 (EVWV…LQNR), 151–184 (KEDQ…NREY), and 468–501 (ANDC…EGKR).

Belongs to the IFT56 family. Component of the IFT complex B. Interacts with IFT46; the interaction is direct.

The protein resides in the cell projection. It localises to the cilium. In terms of biological role, component of the intraflagellar transport (IFT) complex B required for transport of proteins in the motile cilium. Required for transport of specific ciliary cargo proteins related to motility, while it is neither required for IFT complex B assembly or motion nor for cilium assembly. Required for efficient coupling between the accumulation of GLI2 and GLI3 at the ciliary tips and their dissociation from the negative regulator SUFU. Plays a key role in maintaining the integrity of the IFT complex B and the proper ciliary localization of the IFT complex B components. Not required for IFT complex A ciliary localization or function. Essential for maintaining proper microtubule organization within the ciliary axoneme. The chain is Intraflagellar transport protein 56 from Rattus norvegicus (Rat).